Here is a 337-residue protein sequence, read N- to C-terminus: F-box protein At2g27310 (337 aa).

Residues 10–58 enclose the F-box domain; the sequence is DSISTLHSDIIQTQILTRLDGPTLASTATTSSYLQTLCTEEKLWQELSI.

This is F-box protein At2g27310 from Arabidopsis thaliana (Mouse-ear cress).